The sequence spans 238 residues: Purine nucleoside phosphorylase DeoD-type (238 aa).

His4 contributes to the a purine D-ribonucleoside binding site. Residues Gly20, Arg24, Arg43, and 87–90 (RVGS) contribute to the phosphate site. A purine D-ribonucleoside contacts are provided by residues 179 to 181 (EME) and 203 to 204 (SD). Asp204 acts as the Proton donor in catalysis.

The protein belongs to the PNP/UDP phosphorylase family. Homohexamer; trimer of homodimers.

The enzyme catalyses a purine D-ribonucleoside + phosphate = a purine nucleobase + alpha-D-ribose 1-phosphate. It carries out the reaction a purine 2'-deoxy-D-ribonucleoside + phosphate = a purine nucleobase + 2-deoxy-alpha-D-ribose 1-phosphate. Catalyzes the reversible phosphorolytic breakdown of the N-glycosidic bond in the beta-(deoxy)ribonucleoside molecules, with the formation of the corresponding free purine bases and pentose-1-phosphate. This is Purine nucleoside phosphorylase DeoD-type from Pasteurella multocida (strain Pm70).